The primary structure comprises 310 residues: 5-oxoprolinase subunit C (310 aa).

Belongs to the PxpC family. In terms of assembly, forms a complex composed of PxpA, PxpB and PxpC.

The catalysed reaction is 5-oxo-L-proline + ATP + 2 H2O = L-glutamate + ADP + phosphate + H(+). Functionally, catalyzes the cleavage of 5-oxoproline to form L-glutamate coupled to the hydrolysis of ATP to ADP and inorganic phosphate. The protein is 5-oxoprolinase subunit C of Escherichia coli (strain K12).